The chain runs to 85 residues: Translational regulator CsrA (85 aa).

The protein belongs to the CsrA/RsmA family. Homodimer; the beta-strands of each monomer intercalate to form a hydrophobic core, while the alpha-helices form wings that extend away from the core.

The protein localises to the cytoplasm. In terms of biological role, a translational regulator that binds mRNA to regulate translation initiation and/or mRNA stability. Usually binds in the 5'-UTR at or near the Shine-Dalgarno sequence preventing ribosome-binding, thus repressing translation. Its main target seems to be the major flagellin gene, while its function is anatagonized by FliW. This is Translational regulator CsrA from Leifsonia xyli subsp. xyli (strain CTCB07).